A 168-amino-acid polypeptide reads, in one-letter code: Secreted RxLR effector protein RXLR-C06 (168 aa).

An N-terminal signal peptide occupies residues 1–22; it reads MRIQLLWLSFAVLSTILSTCDA. The tract at residues 25–52 is disordered; the sequence is DKLDPQRVQPNQNGSGHNQSIRSALKTS. A compositionally biased stretch (polar residues) spans 32–50; sequence VQPNQNGSGHNQSIRSALK. N-linked (GlcNAc...) asparagine glycosylation is found at Asn-37 and Asn-42. Residues 46–63 carry the RxLR-dEER motif; the sequence is RSALKTSHGKTIADDEER. The 30-residue stretch at 78 to 107 folds into the IQ domain; sequence YKAIVAKLSKYFRDYHERREIRKQRILNKS. An N-linked (GlcNAc...) asparagine glycan is attached at Asn-105.

The protein belongs to the RxLR effector family.

The protein localises to the secreted. The protein resides in the host Golgi apparatus. In terms of biological role, secreted effector that suppresses pattern-triggered immunity (PTI) in plant host. In Plasmopara halstedii (Downy mildew of sunflower), this protein is Secreted RxLR effector protein RXLR-C06.